Reading from the N-terminus, the 287-residue chain is Large ribosomal subunit protein uL2 (287 aa).

2 disordered regions span residues 25–57 (TKTE…RGGG) and 203–287 (LSAG…GRES). Composition is skewed to basic residues over residues 209-220 (GRNRWKGRRPKV) and 259-287 (TRNR…GRES).

The protein belongs to the universal ribosomal protein uL2 family. As to quaternary structure, part of the 50S ribosomal subunit. Forms a bridge to the 30S subunit in the 70S ribosome.

Its function is as follows. One of the primary rRNA binding proteins. Required for association of the 30S and 50S subunits to form the 70S ribosome, for tRNA binding and peptide bond formation. It has been suggested to have peptidyltransferase activity; this is somewhat controversial. Makes several contacts with the 16S rRNA in the 70S ribosome. This Nostoc punctiforme (strain ATCC 29133 / PCC 73102) protein is Large ribosomal subunit protein uL2.